Consider the following 313-residue polypeptide: Putative phosphoribosylaminoimidazole-succinocarboxamide synthase 2 (313 aa).

The protein belongs to the SAICAR synthetase family.

It catalyses the reaction 5-amino-1-(5-phospho-D-ribosyl)imidazole-4-carboxylate + L-aspartate + ATP = (2S)-2-[5-amino-1-(5-phospho-beta-D-ribosyl)imidazole-4-carboxamido]succinate + ADP + phosphate + 2 H(+). It participates in purine metabolism; IMP biosynthesis via de novo pathway; 5-amino-1-(5-phospho-D-ribosyl)imidazole-4-carboxamide from 5-amino-1-(5-phospho-D-ribosyl)imidazole-4-carboxylate: step 1/2. This is Putative phosphoribosylaminoimidazole-succinocarboxamide synthase 2 (purC2) from Mesorhizobium japonicum (strain LMG 29417 / CECT 9101 / MAFF 303099) (Mesorhizobium loti (strain MAFF 303099)).